A 241-amino-acid polypeptide reads, in one-letter code: MATNAKPVYKRILLKLSGEALQGTEGFGIDASILDRMAQEIKELVELGIQVGVVIGGGNLFRGAGLAKAGMNRVVGDHMGMLATVMNGLAMRDALHRAYVNARLMSAIPLNGVCDNYSWAEAISLLRNNRVVILSAGTGNPFFTTDSAACLRGIEIEADVVLKATKVDGVFTADPAKDPSATMYDQLTYSEVLDKELKVMDLAAFTLARDHKLPIRVFNMNKPGALRRVVMGEKEGTLITE.

15 to 18 contributes to the ATP binding site; it reads KLSG. An involved in allosteric activation by GTP region spans residues 23–28; sequence GTEGFG. G57 is a UMP binding site. Positions 58 and 62 each coordinate ATP. Residues D77 and 138–145 each bind UMP; that span reads TGNPFFTT. ATP is bound by residues T165, F171, and D174.

The protein belongs to the UMP kinase family. Homohexamer.

Its subcellular location is the cytoplasm. The enzyme catalyses UMP + ATP = UDP + ADP. It functions in the pathway pyrimidine metabolism; CTP biosynthesis via de novo pathway; UDP from UMP (UMPK route): step 1/1. Its activity is regulated as follows. Allosterically activated by GTP. Inhibited by UTP. In terms of biological role, catalyzes the reversible phosphorylation of UMP to UDP. This chain is Uridylate kinase, found in Salmonella choleraesuis (strain SC-B67).